A 530-amino-acid polypeptide reads, in one-letter code: MTSIYQEFIHTKCQSFRSIGRYVLHSIVLIYRFVSLHVHPFWIQLSYFLLISILGSVLLMFLKPSSPEFKPGYIDMLFLSTSAMTVSGLSTIEMEVLSSSQIVVLTLLMLVGGEVFVSFLGLMLRLKHKHNPEFSGDRVSSVPIELDTIEPTRTVMSSEELQIEAAAPDVPSSTIKDLKRSKRLRWFLGFVVFSYFVVIHVVGFLLVLWYISRVSSAKAPLKKKGINIALFSFSVTVSSFANGGLVPTNENMAIFSKNPGLLLLFIGQILAGNTLYPLFLRILIWFLGKVTKLKDLKLMIKNSDELQYDYLLPKLPTAFLASTVIGLMASLVTLFGSVDWNSSVFDGLSSYQKIINALFMAVNARHSGENSIDCSLIAPAVLVLFIILMYLPPSTTFALSNGDEKTANKKAKRKLGLVVRNLAFSQLACNAVFVIVALITERSRLRNDPLNFSALNMIFEVISAYGNVGLTTGYSCSRLQKLHPGSICQDKPYSLSGWWSDEGKLLLVSVMLYGRLKAFTKGTGEYWRLW.

At 1 to 40 (MTSIYQEFIHTKCQSFRSIGRYVLHSIVLIYRFVSLHVHP) the chain is on the cytoplasmic side. 2 consecutive transmembrane segments (helical) span residues 41–61 (FWIQ…LLMF) and 102–122 (IVVL…FLGL). Residues 123–186 (MLRLKHKHNP…DLKRSKRLRW (64 aa)) are Cytoplasmic-facing. 2 helical membrane-spanning segments follow: residues 187–207 (FLGF…FLLV) and 260–280 (GLLL…PLFL). Residues 281-317 (RILIWFLGKVTKLKDLKLMIKNSDELQYDYLLPKLPT) are Cytoplasmic-facing. The next 2 membrane-spanning stretches (helical) occupy residues 318 to 338 (AFLA…FGSV) and 372 to 392 (IDCS…MYLP). Residues 393–420 (PSTTFALSNGDEKTANKKAKRKLGLVVR) lie on the Cytoplasmic side of the membrane. Transmembrane regions (helical) follow at residues 421–441 (NLAF…LITE) and 494–514 (SLSG…MLYG). The Cytoplasmic portion of the chain corresponds to 515–530 (RLKAFTKGTGEYWRLW).

The protein belongs to the TrkH potassium transport family. HKT (TC 2.A.38.3) subfamily.

The protein localises to the membrane. Seems to be involved in regulation of potassium-sodium homeostasis. Seems to act as a potassium-sodium cotransporter, which mediates increased potassium uptake under external sodium accumulation and contributes to salt-tolerance in cultivar indica Pokkali. This Oryza sativa subsp. indica (Rice) protein is Cation transporter HKT2;2.